Here is a 122-residue protein sequence, read N- to C-terminus: Large ribosomal subunit protein uL14c (122 aa).

Belongs to the universal ribosomal protein uL14 family. As to quaternary structure, part of the 50S ribosomal subunit.

Its subcellular location is the plastid. It localises to the chloroplast. In terms of biological role, binds to 23S rRNA. The polypeptide is Large ribosomal subunit protein uL14c (Chlorella vulgaris (Green alga)).